Here is a 148-residue protein sequence, read N- to C-terminus: Putative nickel-responsive regulator (148 aa).

Ni(2+)-binding residues include H88, H99, H101, and C107.

The protein belongs to the transcriptional regulatory CopG/NikR family. Requires Ni(2+) as cofactor.

Functionally, transcriptional regulator. The polypeptide is Putative nickel-responsive regulator (Helicobacter acinonychis (strain Sheeba)).